The chain runs to 253 residues: 2-C-methyl-D-erythritol 4-phosphate cytidylyltransferase (253 aa).

The protein belongs to the IspD/TarI cytidylyltransferase family. IspD subfamily.

It catalyses the reaction 2-C-methyl-D-erythritol 4-phosphate + CTP + H(+) = 4-CDP-2-C-methyl-D-erythritol + diphosphate. The protein operates within isoprenoid biosynthesis; isopentenyl diphosphate biosynthesis via DXP pathway; isopentenyl diphosphate from 1-deoxy-D-xylulose 5-phosphate: step 2/6. Functionally, catalyzes the formation of 4-diphosphocytidyl-2-C-methyl-D-erythritol from CTP and 2-C-methyl-D-erythritol 4-phosphate (MEP). This is 2-C-methyl-D-erythritol 4-phosphate cytidylyltransferase from Idiomarina loihiensis (strain ATCC BAA-735 / DSM 15497 / L2-TR).